A 792-amino-acid chain; its full sequence is MEERELNQTQDIPEVLPILPLRETVVYPQMLIPLIVGREKSIRLVEDALSGNKLIGMCMQKTPVEDPTPDDIYRIGTVGIIVRSLRFPDNTLRLFVQGLQRIRVIEFLETEPYFKAKVEVIEEKVEKTVEIEGMMRNLLNLFQKMASLIPQFPEELLINAMNIQEPGRLADFIAFNTNLNINEKQEILETIDVKERLQKVTYYLTRELEILEIANKIQNEVKNEIEKSQKEYFLRQQMKAIQKELGEIDPREMEINELRQKLQEAKLPPEAMKEAERELERLSLMPPGSAEYTVTRTYLDWLISLPWAISTEDNLDIKRAEEILNEDHYDLEKVKERILEYLAVRKLKSDMKGPILCFVGPPGVGKTSLGKSIARALGRKFVRISLGGIRDEAEIRGHRRTYVGALPGRIIQGIRKAESNNPVFMLDEIDKLGSDFRGDPAAALLEVLDPEQNNAFVDNYLGVPFDLSKVMFIATANVLYTIPPALLDRMEVIELPGYTEYQKMGIAKGFLIPRQLKEHGLEKEQIEFSDDAIRKIIREYTREAGVRNLEREIASIIRKVAKGIAEGSITEKVIVKVEDVPKYLGPEKYTYGMKGEKDEVGVATGLAWTEAGGDILFVEALVVEGKGNLILTGKLGEVMQESAKTALSYVRSKLKDLNVSYELLEKADIHVHVPSGAIPKDGPSAGVTIATAIASALTRRPVKKDIGMTGEITLRGKVLPVGGIREKVLAAHRAGLTAVIMPKENKKDLEEIPEEVKKEITFYFVEHADEVLNLALLEVKESAEQRNPERIG.

Residues 16–208 form the Lon N-terminal domain; it reads LPILPLRETV…KVTYYLTREL (193 aa). 360-367 serves as a coordination point for ATP; it reads GPPGVGKT. Positions 597 to 778 constitute a Lon proteolytic domain; sequence KDEVGVATGL…DEVLNLALLE (182 aa). Catalysis depends on residues Ser684 and Lys727.

It belongs to the peptidase S16 family. Homohexamer. Organized in a ring with a central cavity.

The protein localises to the cytoplasm. The catalysed reaction is Hydrolysis of proteins in presence of ATP.. ATP-dependent serine protease that mediates the selective degradation of mutant and abnormal proteins as well as certain short-lived regulatory proteins. Required for cellular homeostasis and for survival from DNA damage and developmental changes induced by stress. Degrades polypeptides processively to yield small peptide fragments that are 5 to 10 amino acids long. Binds to DNA in a double-stranded, site-specific manner. In Dictyoglomus thermophilum (strain ATCC 35947 / DSM 3960 / H-6-12), this protein is Lon protease.